A 427-amino-acid chain; its full sequence is Glutamate-1-semialdehyde 2,1-aminomutase (427 aa).

The residue at position 265 (lysine 265) is an N6-(pyridoxal phosphate)lysine.

It belongs to the class-III pyridoxal-phosphate-dependent aminotransferase family. HemL subfamily. Homodimer. The cofactor is pyridoxal 5'-phosphate.

The protein resides in the cytoplasm. The enzyme catalyses (S)-4-amino-5-oxopentanoate = 5-aminolevulinate. Its pathway is porphyrin-containing compound metabolism; protoporphyrin-IX biosynthesis; 5-aminolevulinate from L-glutamyl-tRNA(Glu): step 2/2. In Pseudomonas syringae pv. syringae (strain B728a), this protein is Glutamate-1-semialdehyde 2,1-aminomutase.